The primary structure comprises 137 residues: Small ribosomal subunit protein uS9 (137 aa).

Residues 104–137 (PLKSEGYLTRDPRAKERKKYGLHKARKAPQYSKR) are disordered. Residues 118–137 (KERKKYGLHKARKAPQYSKR) are compositionally biased toward basic residues.

The protein belongs to the universal ribosomal protein uS9 family.

The protein is Small ribosomal subunit protein uS9 of Gloeothece citriformis (strain PCC 7424) (Cyanothece sp. (strain PCC 7424)).